A 361-amino-acid polypeptide reads, in one-letter code: Protein RecA (361 aa).

77–84 (GPESSGKT) serves as a coordination point for ATP.

The protein belongs to the RecA family.

It is found in the cytoplasm. Can catalyze the hydrolysis of ATP in the presence of single-stranded DNA, the ATP-dependent uptake of single-stranded DNA by duplex DNA, and the ATP-dependent hybridization of homologous single-stranded DNAs. It interacts with LexA causing its activation and leading to its autocatalytic cleavage. In Brucella suis (strain ATCC 23445 / NCTC 10510), this protein is Protein RecA.